We begin with the raw amino-acid sequence, 114 residues long: uncharacterized protein (114 aa).

This is an uncharacterized protein from Bacillus subtilis (strain 168).